The sequence spans 174 residues: Ferredoxin-thioredoxin reductase, variable chain, chloroplastic (174 aa).

The transit peptide at 1–62 (MTTGVAVMSS…RTRARLAICC (62 aa)) directs the protein to the chloroplast. Low complexity predominate over residues 69-81 (DSSTGFDSSSSSP). Residues 69–89 (DSSTGFDSSSSSPPEEDEELK) are disordered. A phosphoserine mark is found at S70 and S71.

Belongs to the ferredoxin thioredoxin reductase alpha subunit family. As to quaternary structure, heterodimer of subunit A (variable subunit) and subunit B (catalytic subunit). Heterodimeric FTR forms a complex with ferredoxin and thioredoxin.

Its subcellular location is the plastid. The protein localises to the chloroplast. Its function is as follows. Variable subunit of the ferredoxin-thioredoxin reductase (FTR), which catalyzes the two-electron reduction of thioredoxins by the electrons provided by reduced ferredoxin. This Spinacia oleracea (Spinach) protein is Ferredoxin-thioredoxin reductase, variable chain, chloroplastic (FTRV).